We begin with the raw amino-acid sequence, 429 residues long: Histidine--tRNA ligase (429 aa).

Belongs to the class-II aminoacyl-tRNA synthetase family. As to quaternary structure, homodimer.

It is found in the cytoplasm. The enzyme catalyses tRNA(His) + L-histidine + ATP = L-histidyl-tRNA(His) + AMP + diphosphate + H(+). This is Histidine--tRNA ligase from Streptococcus pneumoniae serotype 2 (strain D39 / NCTC 7466).